The primary structure comprises 274 residues: Phosphate import ATP-binding protein PstB (274 aa).

The segment covering 1 to 11 (MSEISIATSVP) has biased composition (polar residues). Positions 1–21 (MSEISIATSVPSGPGPLIGNQ) are disordered. Positions 28-269 (VIVRDLNFYY…PNDRRTQDYI (242 aa)) constitute an ABC transporter domain. Residue 60–67 (GPSGCGKS) coordinates ATP.

Belongs to the ABC transporter superfamily. Phosphate importer (TC 3.A.1.7) family. The complex is composed of two ATP-binding proteins (PstB), two transmembrane proteins (PstC and PstA) and a solute-binding protein (PstS).

It localises to the cell inner membrane. It carries out the reaction phosphate(out) + ATP + H2O = ADP + 2 phosphate(in) + H(+). Functionally, part of the ABC transporter complex PstSACB involved in phosphate import. Responsible for energy coupling to the transport system. This chain is Phosphate import ATP-binding protein PstB, found in Rhodopseudomonas palustris (strain BisB5).